The sequence spans 546 residues: (-)-5-epieremophilene synthase STPS3 (546 aa).

Positions 299, 303, 442, 446, and 450 each coordinate Mg(2+). Residues 299-303 (DDTYD) carry the DDXXD motif motif.

It belongs to the terpene synthase family. Tpsa subfamily. As to quaternary structure, monomer. Requires Mg(2+) as cofactor. In terms of tissue distribution, highly expressed in flowers and at lower levels in leaves.

The catalysed reaction is (2E,6E)-farnesyl diphosphate = (-)-5-epi-eremophilene + diphosphate. Its pathway is secondary metabolite biosynthesis; terpenoid biosynthesis. Sesquiterpene synthase that catalyzes the conversion of farnesyl diphosphate to (-)-5-epi-eremophilene. The protein is (-)-5-epieremophilene synthase STPS3 of Salvia miltiorrhiza (Chinese sage).